The following is a 217-amino-acid chain: MHNLFLYSVVFSLGLVSFITCFAAEFKRTQKEDIRWDTERNCYVPGSHAFGLGSAAVLCFCLAQIVGNIVVFRNHRTRTKREDGYKITDLTLPTVLLLLSWSNFVVVVLILSTAISMSRAQAYGEGWLDEDCYLVKDGVFAASGCLAILGLGALTISATRIKVKKQQQLVQVVIKDQNQDQRRSMEEEQKHDEHQTNKSESVIHLVEEVSSTNISRI.

A signal peptide spans 1 to 23; it reads MHNLFLYSVVFSLGLVSFITCFA. Over 24–51 the chain is Cytoplasmic; it reads AEFKRTQKEDIRWDTERNCYVPGSHAFG. A helical membrane pass occupies residues 52 to 72; the sequence is LGSAAVLCFCLAQIVGNIVVF. The Extracellular portion of the chain corresponds to 73–94; that stretch reads RNHRTRTKREDGYKITDLTLPT. The chain crosses the membrane as a helical span at residues 95-115; that stretch reads VLLLLSWSNFVVVVLILSTAI. Residues 116 to 137 lie on the Cytoplasmic side of the membrane; that stretch reads SMSRAQAYGEGWLDEDCYLVKD. The helical transmembrane segment at 138–158 threads the bilayer; sequence GVFAASGCLAILGLGALTISA. Residues 159–217 are Extracellular-facing; that stretch reads TRIKVKKQQQLVQVVIKDQNQDQRRSMEEEQKHDEHQTNKSESVIHLVEEVSSTNISRI. Residues asparagine 197 and asparagine 213 are each glycosylated (N-linked (GlcNAc...) asparagine).

Belongs to the DESIGUAL family.

The protein resides in the cell membrane. Together with MWL1, contributes to secondary cell wall biology, specifically lignin biosynthesis. The sequence is that of Protein MODIFYING WALL LIGNIN-2 from Arabidopsis thaliana (Mouse-ear cress).